A 162-amino-acid polypeptide reads, in one-letter code: Interleukin-15 (162 aa).

A signal peptide spans 1–29 (MRISKPHLRSVSIQCYLCLLLNSHFLTEA). The propeptide occupies 30–48 (GIHVFILGCFSAGLPKTEA). 2 disulfides stabilise this stretch: Cys-83-Cys-133 and Cys-90-Cys-136. Asn-127 is a glycosylation site (N-linked (GlcNAc...) asparagine).

Belongs to the IL-15/IL-21 family.

The protein localises to the secreted. In terms of biological role, cytokine that plays a major role in the development of inflammatory and protective immune responses to microbial invaders and parasites by modulating immune cells of both the innate and adaptive immune systems. Stimulates the proliferation of natural killer cells, T-cells and B-cells and promotes the secretion of several cytokines. In monocytes, induces the production of IL8 and monocyte chemotactic protein 1/CCL2, two chemokines that attract neutrophils and monocytes respectively to sites of infection. Unlike most cytokines, which are secreted in soluble form, IL15 is expressed in association with its high affinity IL15RA on the surface of IL15-producing cells and delivers signals to target cells that express IL2RB and IL2RG receptor subunits. Binding to its receptor triggers the phosphorylation of JAK1 and JAK3 and the recruitment and subsequent phosphorylation of signal transducer and activator of transcription-3/STAT3 and STAT5. In mast cells, induces the rapid tyrosine phosphorylation of STAT6 and thereby controls mast cell survival and release of cytokines such as IL4. This Macaca thibetana (Pere David's macaque) protein is Interleukin-15 (IL15).